The sequence spans 117 residues: Synaptobrevin homolog 1 (117 aa).

The segment at 1–30 (MSSSTPFDPYALSEHDEERPQNVQSKSRTA) is disordered. Residues 1–94 (MSSSTPFDPY…MWYKDLKMKM (94 aa)) lie on the Cytoplasmic side of the membrane. The region spanning 28–88 (RTAELQAEID…NRVRKAMWYK (61 aa)) is the v-SNARE coiled-coil homology domain. Lysine 63 is covalently cross-linked (Glycyl lysine isopeptide (Lys-Gly) (interchain with G-Cter in ubiquitin)). A lipid anchor (S-palmitoyl cysteine) is attached at cysteine 95. A helical; Anchor for type IV membrane protein transmembrane segment spans residues 95-111 (CLALVIIILLVVIIVPI). Residues 112 to 117 (AVHFSR) are Vesicular-facing.

Belongs to the synaptobrevin family. Palmitoylated by SWF1.

Its subcellular location is the endomembrane system. SNC1 and SNC2 are vesicle-targeting proteins essential for normal secretory traffic between the Golgi and the plasma membrane. They may also be involved in vesicle fusion. The protein is Synaptobrevin homolog 1 (SNC1) of Saccharomyces cerevisiae (strain ATCC 204508 / S288c) (Baker's yeast).